The primary structure comprises 154 residues: Large-conductance mechanosensitive channel (154 aa).

The next 3 membrane-spanning stretches (helical) occupy residues 16 to 36, 39 to 59, and 89 to 109; these read VLGL…ISSV, DLLM…GFFI, and GQFL…FMIM.

This sequence belongs to the MscL family. As to quaternary structure, homopentamer.

It is found in the cell inner membrane. Its function is as follows. Channel that opens in response to stretch forces in the membrane lipid bilayer. May participate in the regulation of osmotic pressure changes within the cell. The chain is Large-conductance mechanosensitive channel from Zymomonas mobilis subsp. mobilis (strain ATCC 31821 / ZM4 / CP4).